The chain runs to 288 residues: Pyridoxal kinase PdxY (288 aa).

Residues Ser-9 and 44 to 45 each bind substrate; that span reads TQ. Residues Asp-111, Glu-148, and Lys-181 each contribute to the ATP site. Asp-224 contacts substrate.

This sequence belongs to the pyridoxine kinase family. PdxY subfamily. Homodimer. It depends on Mg(2+) as a cofactor.

It carries out the reaction pyridoxal + ATP = pyridoxal 5'-phosphate + ADP + H(+). The protein operates within cofactor metabolism; pyridoxal 5'-phosphate salvage; pyridoxal 5'-phosphate from pyridoxal: step 1/1. Pyridoxal kinase involved in the salvage pathway of pyridoxal 5'-phosphate (PLP). Catalyzes the phosphorylation of pyridoxal to PLP. In Haemophilus influenzae (strain PittEE), this protein is Pyridoxal kinase PdxY.